Reading from the N-terminus, the 195-residue chain is 3-isopropylmalate dehydratase small subunit (195 aa).

The protein belongs to the LeuD family. LeuD type 1 subfamily. As to quaternary structure, heterodimer of LeuC and LeuD.

It catalyses the reaction (2R,3S)-3-isopropylmalate = (2S)-2-isopropylmalate. It functions in the pathway amino-acid biosynthesis; L-leucine biosynthesis; L-leucine from 3-methyl-2-oxobutanoate: step 2/4. Functionally, catalyzes the isomerization between 2-isopropylmalate and 3-isopropylmalate, via the formation of 2-isopropylmaleate. The protein is 3-isopropylmalate dehydratase small subunit of Thermobifida fusca (strain YX).